The following is a 306-amino-acid chain: Erythromycin 3''-O-methyltransferase (306 aa).

S-adenosyl-L-methionine is bound by residues Leu157 and His162.

The protein belongs to the methyltransferase superfamily.

It catalyses the reaction erythromycin C + S-adenosyl-L-methionine = erythromycin A + S-adenosyl-L-homocysteine + H(+). The enzyme catalyses erythromycin D + S-adenosyl-L-methionine = erythromycin B + S-adenosyl-L-homocysteine + H(+). Its pathway is antibiotic biosynthesis; erythromycin biosynthesis. S-adenosyl-L-methionine-dependent O-methyltransferase that catalyzes the last step in the erythromycin biosynthesis pathway. Methylates the position 3 of the mycarosyl moiety of erythromycin C, forming the most active form of the antibiotic, erythromycin A. Can also methylate the precursor erythromycin D, forming erythromycin B. This chain is Erythromycin 3''-O-methyltransferase (eryG), found in Saccharopolyspora erythraea (strain ATCC 11635 / DSM 40517 / JCM 4748 / NBRC 13426 / NCIMB 8594 / NRRL 2338).